We begin with the raw amino-acid sequence, 732 residues long: Zinc/cadmium/lead-transporting P-type ATPase (732 aa).

The Cytoplasmic portion of the chain corresponds to methionine 1–arginine 124. Positions threonine 48–arginine 112 constitute an HMA domain. 3 residues coordinate Zn(2+): aspartate 58, cysteine 59, and cysteine 62. The chain crosses the membrane as a helical span at residues leucine 125–glutamate 145. Residue glutamine 146 is a topological domain, periplasmic. A helical transmembrane segment spans residues phenylalanine 147–isoleucine 167. Over alanine 168–serine 179 the chain is Cytoplasmic. The helical transmembrane segment at tyrosine 180–isoleucine 197 threads the bilayer. The Periplasmic portion of the chain corresponds to glycine 198–glutamate 202. The helical transmembrane segment at alanine 203–serine 222 threads the bilayer. At arginine 223–proline 356 the chain is on the cytoplasmic side. The chain crosses the membrane as a helical span at residues alanine 357 to tryptophan 377. The Periplasmic segment spans residues glutamine 378–lysine 383. Residues glycine 384–isoleucine 404 form a helical membrane-spanning segment. Residues cysteine 392 and cysteine 394 each contribute to the Zn(2+) site. Residues threonine 405 to asparagine 685 are Cytoplasmic-facing. Aspartate 436 acts as the 4-aspartylphosphate intermediate in catalysis. Mg(2+) is bound by residues aspartate 436, threonine 438, and aspartate 628. Residues isoleucine 686–leucine 702 traverse the membrane as a helical segment. Residues glycine 703–leucine 707 are Periplasmic-facing. The helical transmembrane segment at tryptophan 708 to leucine 729 threads the bilayer. Aspartate 714 contacts Zn(2+). Over arginine 730–arginine 732 the chain is Cytoplasmic.

Belongs to the cation transport ATPase (P-type) (TC 3.A.3) family. Type IB subfamily.

Its subcellular location is the cell inner membrane. The catalysed reaction is Pb(2+)(in) + ATP + H2O = Pb(2+)(out) + ADP + phosphate + H(+). It catalyses the reaction Zn(2+)(in) + ATP + H2O = Zn(2+)(out) + ADP + phosphate + H(+). The enzyme catalyses Cd(2+)(in) + ATP + H2O = Cd(2+)(out) + ADP + phosphate + H(+). Inhibited by orthovanadate. Its function is as follows. Confers resistance to zinc, cadmium and lead. Couples the hydrolysis of ATP with the export of zinc, cadmium or lead, with highest activity when the metals are present as metal-thiolate complexes. Can also bind nickel, copper, cobalt and mercury. The protein is Zinc/cadmium/lead-transporting P-type ATPase of Escherichia coli (strain K12).